We begin with the raw amino-acid sequence, 745 residues long: Immunoglobulin superfamily containing leucine-rich repeat protein 2 (745 aa).

Residues 1–19 (MGPFGALCLAWALLGVVRA) form the signal peptide. One can recognise an LRRNT domain in the interval 20–51 (CPEPCACVDKYAHQFADCAYKELREVPEGLPA). Over 20-589 (CPEPCACVDK…VFSTKKELPS (570 aa)) the chain is Extracellular. Residues Asn52 and Asn73 are each glycosylated (N-linked (GlcNAc...) asparagine). LRR repeat units follow at residues 52-73 (NVTTLSLSANKITVLRRGAFVN), 76-97 (QVTSLWLAHSEVRTVESGALAV), 100-123 (QLKNLDLSHNLISNFPWSDLRNLS), 124-145 (ALQLLKMNHNRLGSLPRDALGA), and 148-169 (DLRSLRINNNRLRTLEPGTFDA). A glycan (N-linked (GlcNAc...) asparagine) is linked at Asn121. The region spanning 181–232 (NPFHCSCGLVWLQAWAASTRVSLPEPDSIACASPPELQGVPVHRLPALPCAP) is the LRRCT domain. The Ig-like domain maps to 233 to 372 (PSVRLSAEPP…GTNSTSLRVT (140 aa)). An intrachain disulfide couples Cys260 to Cys356. The segment covering 290–300 (KEEDGGDKVED) has biased composition (basic and acidic residues). The segment at 290–328 (KEEDGGDKVEDGEGDGDEDLPTQTEAPTPTPAPAWPAPP) is disordered. Residues 317-328 (TPTPAPAWPAPP) are compositionally biased toward pro residues. N-linked (GlcNAc...) asparagine glycans are attached at residues Asn338 and Asn365. The segment at 376–423 (AGPPKHAPGTGEEPDAQVPTSERKATTKGRSNSVLPFKPEGKTKGQGL) is disordered. N-linked (GlcNAc...) asparagine glycosylation is found at Asn474 and Asn563. The chain crosses the membrane as a helical span at residues 590–610 (LLVIVTVSVFLLVLATVPLLG). Over 611 to 745 (AACCHLLAKH…INGNYRQTAG (135 aa)) the chain is Cytoplasmic. Residues 654–697 (SEKSYPARGEAGGEEPEEVPEEGLDEDVEQGDPSGDLQREESLA) are disordered. Positions 665–683 (GGEEPEEVPEEGLDEDVEQ) are enriched in acidic residues. Tyr719 is subject to Phosphotyrosine. A Phosphoserine modification is found at Ser720.

As to quaternary structure, homomultimer. Interacts with NTRK1/TrkA. At 11.5 dpc, expressed in spinal nerves, their roots and the ventral spinal cord. At 12.5 dpc, detected in the ventral spinal cord, dorsal root ganglia (DRG), dorsal and ventral roots and sympathetic chain ganglia. At 12.5 dpc, expressed in almost all motor neurons which also express RET and in almost all DRG sensory neurons which also express NTRK1. At 18.5 dpc, expressed only in a subset of NTRK1-expressing neurons but still expressed in nearly all RET-expressing neurons.

It localises to the cell membrane. Its function is as follows. Required for axon extension during neural development. This Mus musculus (Mouse) protein is Immunoglobulin superfamily containing leucine-rich repeat protein 2 (Islr2).